The primary structure comprises 347 residues: MQYTLKQISEHLNAKVINEPSGEVIITGLTYAEQAKENDLTLIDKQEHIKLWQNSKATAAIVSKKISKELAQVNDKPLIVVNNADLAMAKILELFSVPYPEQNGIHEKAIIDPTAKIGKNVSIGPSAYIGKNVEIGDNTIIYANVCIYNDAKVGTNCIIWPSVIIRDRTIIGHFCRLCSNCSIGSDGFGYRPSEDGRTIVRIPHIGNVVIGSFVDIGSNTCINNAKYGSTIIGDYTKIDNLVQIGHNVIIGKGCMICGQAGISGSVTIGDGVIIAGNAGIKDHTNIGSDARIGGKAGVMWDVPAGESHMGYPAYKDSELAKQWIAIRKLPETMKKLKAIAKSLNIDL.

Catalysis depends on His246, which acts as the Proton acceptor.

This sequence belongs to the transferase hexapeptide repeat family. LpxD subfamily. In terms of assembly, homotrimer.

It carries out the reaction a UDP-3-O-[(3R)-3-hydroxyacyl]-alpha-D-glucosamine + a (3R)-hydroxyacyl-[ACP] = a UDP-2-N,3-O-bis[(3R)-3-hydroxyacyl]-alpha-D-glucosamine + holo-[ACP] + H(+). It participates in bacterial outer membrane biogenesis; LPS lipid A biosynthesis. In terms of biological role, catalyzes the N-acylation of UDP-3-O-acylglucosamine using 3-hydroxyacyl-ACP as the acyl donor. Is involved in the biosynthesis of lipid A, a phosphorylated glycolipid that anchors the lipopolysaccharide to the outer membrane of the cell. The chain is UDP-3-O-acylglucosamine N-acyltransferase 1 from Francisella tularensis subsp. tularensis (strain SCHU S4 / Schu 4).